A 159-amino-acid polypeptide reads, in one-letter code: MIAIYPGSFDPITLGHLDIIERGSGLFEQIIVAVLCNPSKQPLFSVEKRLEQIRHCTQHLTNVTVDSFNGLTVDYAKQKQATVLLRGLRVLSDFEKELQMAHTNQTLWDGVETVFLATAKEYSFLSSSIVKEIAKFGGSVDHLVPPSILADICSSYPSP.

Position 8 (serine 8) interacts with substrate. Residues 8 to 9 (SF) and histidine 16 contribute to the ATP site. Substrate-binding residues include lysine 40, threonine 72, and arginine 86. ATP is bound by residues 87–89 (GLR), glutamate 97, and 122–128 (YSFLSSS).

The protein belongs to the bacterial CoaD family. In terms of assembly, homohexamer. The cofactor is Mg(2+).

The protein resides in the cytoplasm. It catalyses the reaction (R)-4'-phosphopantetheine + ATP + H(+) = 3'-dephospho-CoA + diphosphate. The protein operates within cofactor biosynthesis; coenzyme A biosynthesis; CoA from (R)-pantothenate: step 4/5. Functionally, reversibly transfers an adenylyl group from ATP to 4'-phosphopantetheine, yielding dephospho-CoA (dPCoA) and pyrophosphate. This chain is Phosphopantetheine adenylyltransferase, found in Synechocystis sp. (strain ATCC 27184 / PCC 6803 / Kazusa).